The chain runs to 338 residues: Ribonucleoside-diphosphate reductase small subunit (338 aa).

Fe cation contacts are provided by Asp81, Glu112, and His115. The active site involves Tyr119. Positions 174, 208, and 211 each coordinate Fe cation.

This sequence belongs to the ribonucleoside diphosphate reductase small chain family. Heterodimer of a large and a small subunit. Fe cation is required as a cofactor.

The protein localises to the cytoplasm. The catalysed reaction is a 2'-deoxyribonucleoside 5'-diphosphate + [thioredoxin]-disulfide + H2O = a ribonucleoside 5'-diphosphate + [thioredoxin]-dithiol. Its function is as follows. Provides the precursors necessary for DNA synthesis. Catalyzes the biosynthesis of deoxyribonucleotides from the corresponding ribonucleotides. This Dictyostelium discoideum (Social amoeba) protein is Ribonucleoside-diphosphate reductase small subunit (rnrB-1).